Reading from the N-terminus, the 106-residue chain is Valine dehydrogenase (106 aa).

Lysine 91 is an active-site residue.

Belongs to the Glu/Leu/Phe/Val dehydrogenases family. In terms of assembly, homodimer.

It localises to the cytoplasm. The catalysed reaction is L-valine + NAD(+) + H2O = 3-methyl-2-oxobutanoate + NH4(+) + NADH + H(+). Its pathway is amino-acid degradation; L-valine degradation. Functionally, oxidative deamination of branched-chain amino acids. The catabolism of valine is the major source of fatty acid precursors for macrolide biosynthesis and a vital source of antibiotic precursors. The polypeptide is Valine dehydrogenase (vdh) (Streptomyces ambofaciens).